The chain runs to 63 residues: Large ribosomal subunit protein bL28 (63 aa).

This sequence belongs to the bacterial ribosomal protein bL28 family.

The chain is Large ribosomal subunit protein bL28 from Heliobacterium modesticaldum (strain ATCC 51547 / Ice1).